Reading from the N-terminus, the 542-residue chain is Protein phosphatase 1G (542 aa).

The N-myristoyl glycine moiety is linked to residue Gly2. Residue Arg22 is modified to Omega-N-methylarginine. Residues 26–502 (PYGFSAMQGW…DNMTCIIICF (477 aa)) form the PPM-type phosphatase domain. Mn(2+)-binding residues include Asp60 and Gly61. 2 disordered regions span residues 118–139 (AGRP…DVDN) and 162–325 (QNCQ…SDSG). Thr122 is modified (phosphothreonine). Acidic residues-rich tracts occupy residues 123 to 139 (EDED…DVDN) and 259 to 309 (DSED…DEEM). Lys380 carries the post-translational modification N6-acetyllysine. The Mn(2+) site is built by Asp438 and Asp493. Residues 510 to 542 (LQPESGKRKLEEALSTEGAEENGNSDKKKAKRD) are disordered. Ser524 carries the post-translational modification Phosphoserine.

It belongs to the PP2C family. Interacts with NOL3; may dephosphorylate NOL3. Mg(2+) serves as cofactor. The cofactor is Mn(2+).

The protein resides in the cytoplasm. It localises to the membrane. The enzyme catalyses O-phospho-L-seryl-[protein] + H2O = L-seryl-[protein] + phosphate. It carries out the reaction O-phospho-L-threonyl-[protein] + H2O = L-threonyl-[protein] + phosphate. This chain is Protein phosphatase 1G, found in Rattus norvegicus (Rat).